Reading from the N-terminus, the 384-residue chain is Polyketide synthase BAS (384 aa).

The active-site Nucleophile and monoketide coumarate intermediate is Cys-157. Position 157 is an S-(4-hydroxycinnamyl)cysteine (Cys-157).

This sequence belongs to the thiolase-like superfamily. Chalcone/stilbene synthases family. As to quaternary structure, homodimer.

It carries out the reaction 4-coumaroyl-CoA + malonyl-CoA + H2O + H(+) = 4-hydroxybenzalacetone + 2 CO2 + 2 CoA. Its pathway is secondary metabolite biosynthesis; flavonoid biosynthesis. Polyketide synthase producing 4-hydroxybenzalacetone. Can use p-coumaryl-CoA as substrate but does not accept hexanoyl-CoA, isobutyryl-CoA, isovaleryl-CoA, and acetyl-CoA as a substrates. Catalyzes the initial key reaction step in the biosynthesis of phenylbutanoids. This Rheum palmatum (Chinese rhubarb) protein is Polyketide synthase BAS (BAS).